The following is a 229-amino-acid chain: Uracil-DNA glycosylase (229 aa).

Residue D64 is the Proton acceptor of the active site.

The protein belongs to the uracil-DNA glycosylase (UDG) superfamily. UNG family.

Its subcellular location is the cytoplasm. The catalysed reaction is Hydrolyzes single-stranded DNA or mismatched double-stranded DNA and polynucleotides, releasing free uracil.. Its function is as follows. Excises uracil residues from the DNA which can arise as a result of misincorporation of dUMP residues by DNA polymerase or due to deamination of cytosine. The polypeptide is Uracil-DNA glycosylase (Escherichia coli O81 (strain ED1a)).